Consider the following 390-residue polypeptide: Tumor susceptibility gene 101 protein (390 aa).

At Ala2 the chain carries N-acetylalanine. In terms of domain architecture, UEV spans Ala2–Pro145. Residues Pro158–Ser162 are interaction with CEP55. A compositionally biased stretch (polar residues) spans Ala198–Gly214. Positions Ala198–Thr220 are disordered. Thr220 carries the post-translational modification Phosphothreonine. Residues Ser235–Glu316 adopt a coiled-coil conformation. Positions Pro320–Pro323 match the PTAP motif motif. An SB domain is found at Ala322–Tyr390.

Belongs to the ubiquitin-conjugating enzyme family. UEV subfamily. Component of the ESCRT-I complex (endosomal sorting complex required for transport I) which consists of TSG101, VPS28, a VPS37 protein (VPS37A to -D) and MVB12A or MVB12B in a 1:1:1:1 stoichiometry. Interacts with VPS37A, VPS37B and VPS37C. Interacts with DMAP1. Interacts with ubiquitin. Interacts with stathmin, GMCL and AATF. Component of an ESCRT-I complex (endosomal sorting complex required for transport I) which consists of TSG101, VPS28, VPS37A and UBAP1 in a 1:1:1:1 stoichiometry. Interacts with HGS; the interaction mediates the association with the ESCRT-0 complex. Interacts with GGA1 and GGA3. Interacts (via UEV domain) with PDCD6IP/AIP1. Interacts with VPS28, SNF8 and VPS36. Self-associates. Interacts with MVB12A; the association appears to be mediated by the TSG101-VPS37 binary subcomplex. Interacts with VPS37D. Interacts with LRSAM1. Interacts with CEP55; the interaction is required for cytokinesis but not for viral budding. Interacts with PDCD6. Interacts with LITAF. Interacts with MGRN1. Interacts with ARRDC1; recruits TSG101 to the plasma membrane. In terms of assembly, (Microbial infection) Interacts with HIV-1 p6. As to quaternary structure, (Microbial infection) Interacts with human spumavirus Gag. (Microbial infection) Interacts with HTLV-1 Gag. In terms of assembly, (Microbial infection) Interacts with Ebola virus VP40. As to quaternary structure, (Microbial infection) Interacts with EIAV p9; the interaction has been shown in vitro. (Microbial infection) Interacts with Lassa virus protein Z. In terms of assembly, (Microbial infection) Interacts with hepatitis E virus protein ORF3. In terms of processing, monoubiquitinated at multiple sites by LRSAM1 and by MGRN1. Ubiquitination inactivates it, possibly by regulating its shuttling between an active membrane-bound protein and an inactive soluble form. Ubiquitination by MGRN1 requires the presence of UBE2D1. Heart, brain, placenta, lung, liver, skeletal, kidney and pancreas.

The protein localises to the cytoplasm. The protein resides in the early endosome membrane. It is found in the late endosome membrane. Its subcellular location is the cytoskeleton. It localises to the microtubule organizing center. The protein localises to the centrosome. The protein resides in the midbody. It is found in the midbody ring. Its subcellular location is the nucleus. Its function is as follows. Component of the ESCRT-I complex, a regulator of vesicular trafficking process. Binds to ubiquitinated cargo proteins and is required for the sorting of endocytic ubiquitinated cargos into multivesicular bodies (MVBs). Mediates the association between the ESCRT-0 and ESCRT-I complex. Required for completion of cytokinesis; the function requires CEP55. May be involved in cell growth and differentiation. Acts as a negative growth regulator. Involved in the budding of many viruses through an interaction with viral proteins that contain a late-budding motif P-[ST]-A-P. This interaction is essential for viral particle budding of numerous retroviruses. Required for the exosomal release of SDCBP, CD63 and syndecan. It may also play a role in the extracellular release of microvesicles that differ from the exosomes. This is Tumor susceptibility gene 101 protein (TSG101) from Homo sapiens (Human).